The sequence spans 620 residues: Mitochondrial Rho GTPase 2 (620 aa).

Over 1–594 the chain is Cytoplasmic; that stretch reads MKRDVRILLL…ELHTTSFWLR (594 aa). The Miro 1 domain maps to 2 to 168; that stretch reads KRDVRILLLG…FYYAQKAVLH (167 aa). The GTP site is built by glycine 16, lysine 17, threonine 18, and serine 19. Threonine 18 is a binding site for Mg(2+). The Mg(2+) site is built by proline 35 and aspartate 57. Serine 59 is a GTP binding site. Residue lysine 96 forms a Glycyl lysine isopeptide (Lys-Gly) (interchain with G-Cter in ubiquitin) linkage. Asparagine 118, lysine 119, aspartate 121, alanine 149, and lysine 150 together coordinate GTP. A Glycyl lysine isopeptide (Lys-Gly) (interchain with G-Cter in ubiquitin) cross-link involves residue lysine 119. Lysine 164 participates in a covalent cross-link: Glycyl lysine isopeptide (Lys-Gly) (interchain with G-Cter in ubiquitin). EF-hand domains lie at 184 to 219 and 304 to 339; these read ACAQALTRIFRLSDQDMDQALSDQELNAFQTCCFGH and HGYQFAQRMLEKHDQDRDGALSPAELESLFSVFPGP. Ca(2+)-binding residues include aspartate 197, aspartate 199, aspartate 201, glutamate 208, aspartate 317, aspartate 319, aspartate 321, and glutamate 328. Positions 340–364 are disordered; that stretch reads PWGPQLPRHRPHRGRSAAPARVPLP. The region spanning 415 to 578 is the Miro 2 domain; the sequence is RNVLLCKVLG…FARLATMATF (164 aa). Positions 427, 429, 430, and 431 each coordinate GTP. Mg(2+) contacts are provided by serine 431 and glutamate 473. 3 residues coordinate GTP: lysine 527, aspartate 529, and cysteine 558. Residues 595–617 traverse the membrane as a helical; Anchor for type IV membrane protein segment; it reads VALGAVGAAVAAILSFSLYRVLV. The Mitochondrial intermembrane portion of the chain corresponds to 618 to 620; that stretch reads KSR.

The protein belongs to the mitochondrial Rho GTPase family. As to quaternary structure, homodimer. Interacts with the kinesin-binding proteins TRAK1/OIP106 and TRAK2/GRIF1, forming a link between mitochondria and the trafficking apparatus of the microtubules. Interacts with ARMCX3. Found in a complex with KIF5B, OGT, RHOT1 and TRAK1. Post-translationally, ubiquitinated by PRKN in a PINK1-dependent manner, leading to its degradation.

The protein localises to the mitochondrion outer membrane. It carries out the reaction GTP + H2O = GDP + phosphate + H(+). It catalyses the reaction ATP + H2O = ADP + phosphate + H(+). The enzyme catalyses UTP + H2O = UDP + phosphate + H(+). Its function is as follows. Atypical mitochondrial nucleoside-triphosphatase (NTPase) involved in mitochondrial trafficking. Probably involved in control of anterograde transport of mitochondria and their subcellular distribution. Can hydrolyze GTP, ATP and UTP. The protein is Mitochondrial Rho GTPase 2 (RHOT2) of Sus scrofa (Pig).